Consider the following 305-residue polypeptide: MLVTGLEILRKARAEGYGVGAFNTNNMEFTQAILEAAEEMKSPVILALSEGAMKYGGRALTRMVVALAQEARVPVAVHLDHGSSYESVLKALREGFTSVMIDKSHEDFETNVRETKRVVEAAHAVGVTVEAELGRLAGIEEHVAVDEKDALLTNPEEARIFMERTGADYLAVAIGTSHGAYKGKGRPFIDHPRLARIAKLVPAPLVLHGASAVPQELVERFRAAGGEIGEASGIHPEDIKKAISLGIAKINTDTDLRLAFTALVRETLGKNPKEFDPRKYLGPAREAVKEVVKSRMELFGSVGRA.

S49 lines the D-glyceraldehyde 3-phosphate pocket. The active-site Proton donor is D80. Zn(2+) is bound by residues H81, D102, E132, and H178. G179 contributes to the dihydroxyacetone phosphate binding site. H208 is a binding site for Zn(2+). Residues 209–211 and 251–254 each bind dihydroxyacetone phosphate; these read GAS and NTDT.

It belongs to the class II fructose-bisphosphate aldolase family. As to quaternary structure, homotetramer. The cofactor is Zn(2+).

It catalyses the reaction beta-D-fructose 1,6-bisphosphate = D-glyceraldehyde 3-phosphate + dihydroxyacetone phosphate. It participates in carbohydrate degradation; glycolysis; D-glyceraldehyde 3-phosphate and glycerone phosphate from D-glucose: step 4/4. Catalyzes the aldol condensation of dihydroxyacetone phosphate (DHAP or glycerone-phosphate) with glyceraldehyde 3-phosphate (G3P) to form fructose 1,6-bisphosphate (FBP) in gluconeogenesis and the reverse reaction in glycolysis. The sequence is that of Fructose-bisphosphate aldolase from Thermus caldophilus.